We begin with the raw amino-acid sequence, 44 residues long: Photosystem I reaction center subunit IX (44 aa).

A helical membrane pass occupies residues 7-27 (YLSVAPVLTTLWFGSLAGLLI).

It belongs to the PsaJ family.

The protein resides in the plastid. It is found in the chloroplast thylakoid membrane. May help in the organization of the PsaE and PsaF subunits. This chain is Photosystem I reaction center subunit IX, found in Liriodendron tulipifera (Tuliptree).